The chain runs to 89 residues: Cell division topological specificity factor (89 aa).

It belongs to the MinE family.

Its function is as follows. Prevents the cell division inhibition by proteins MinC and MinD at internal division sites while permitting inhibition at polar sites. This ensures cell division at the proper site by restricting the formation of a division septum at the midpoint of the long axis of the cell. The sequence is that of Cell division topological specificity factor from Paracoccus denitrificans (strain Pd 1222).